A 103-amino-acid chain; its full sequence is Conantokin-Br (103 aa).

Residues 1–21 (MQLYTYLYLLVPLVTFHLILG) form the signal peptide. Residues 22–79 (TGTLDHGGALTERRSTDATALKPEPVLQKSAARSTDDNGKDRLTQMKRILKKRGKNAR) constitute a propeptide that is removed on maturation. A disordered region spans residues 34 to 64 (RRSTDATALKPEPVLQKSAARSTDDNGKDRL). Basic and acidic residues predominate over residues 55 to 64 (STDDNGKDRL). 4-carboxyglutamate occurs at positions 82, 83, 89, and 93. A divalent metal cation is bound by residues Glu89 and Glu93.

The protein belongs to the conotoxin B superfamily. It depends on Ca(2+) as a cofactor. The cofactor is Mg(2+). Expressed by the venom duct.

The protein localises to the secreted. Conantokins inhibit N-methyl-D-aspartate (NMDA) receptors. This toxin inhibits NR2 subunits N-methyl-D-aspartate (NMDA) receptor-mediated calcium influx in central nervous system neurons in the following order of preference: NR2B/GRIN2B (IC(50)=0.14 uM), NR2D/GRIN2D (IC(50)=0.31 uM), NR2A/GRIN2A (IC(50)=0.68 uM) and NR2C/GRIN2A (IC(50)=4.9 uM), when tested on rat receptors. In Conus sulcatus (Sulcate cone), this protein is Conantokin-Br.